The following is a 129-amino-acid chain: Selenoprotein M (129 aa).

The N-terminal stretch at 1–19 (MARGLAVFFLLAGACLALA) is a signal peptide. Residues Cys-35 and Sec-38 each act as nucleophile in the active site. Position 38 (Sec-38) is a non-standard amino acid, selenocysteine. The segment at 107–129 (KSSKDEQVPEEYQEGPYMEKEEL) is disordered. The Prevents secretion from ER signature appears at 126–129 (KEEL).

Belongs to the selenoprotein M/F family. High expression levels observed in hepatopancreas, testis, ovaries and intestine. Also expressed in heart, stomach, gills, cranial ganglia, muscle and hematocytes.

It localises to the endoplasmic reticulum. In terms of biological role, may function as a thiol-disulfide oxidoreductase that participates in disulfide bond formation. Involved in the regulation of reproduction during the period of rapid gonadal development. The sequence is that of Selenoprotein M from Eriocheir sinensis (Chinese mitten crab).